The primary structure comprises 228 residues: Small ribosomal subunit protein uS10m (228 aa).

A mitochondrion-targeting transit peptide spans 1–17 (MKRYMFGTLPRVQPKRC).

Belongs to the universal ribosomal protein uS10 family. In terms of assembly, component of the mitochondrial small ribosomal subunit (mt-SSU). Mature yeast 74S mitochondrial ribosomes consist of a small (37S) and a large (54S) subunit. The 37S small subunit contains a 15S ribosomal RNA (15S mt-rRNA) and at least 32 different proteins. The 54S large subunit contains a 21S rRNA (21S mt-rRNA) and at least 45 different proteins.

It is found in the mitochondrion. In terms of biological role, component of the mitochondrial ribosome (mitoribosome), a dedicated translation machinery responsible for the synthesis of mitochondrial genome-encoded proteins, including at least some of the essential transmembrane subunits of the mitochondrial respiratory chain. The mitoribosomes are attached to the mitochondrial inner membrane and translation products are cotranslationally integrated into the membrane. This Schizosaccharomyces pombe (strain 972 / ATCC 24843) (Fission yeast) protein is Small ribosomal subunit protein uS10m (rsm10).